The following is an 862-amino-acid chain: uncharacterized protein (862 aa).

Residues 1-25 form the signal peptide; the sequence is MKPRPYSVFLFLHIVFYSLLSAVNG. The Lumenal portion of the chain corresponds to 26–61; sequence SPSLDYFETCSNFVPRAGIPTFSPYAVIKNFDEVNR. A helical membrane pass occupies residues 62 to 82; the sequence is MYYIQVVGNLSGVITIVGGNG. Topologically, residues 83 to 187 are cytoplasmic; the sequence is SHIHAASVYS…STTLYYFYPV (105 aa). Residues 188–208 form a helical membrane-spanning segment; the sequence is ISYLVVVSLAYVSFSIIYALF. Over 209 to 230 the chain is Lumenal; the sequence is LNPWTGSLDPFKSIFNFNMDPD. Residues 231 to 250 form a helical membrane-spanning segment; sequence ALRLTSLGFFDFVQYLQFAV. At 251–256 the chain is on the cytoplasmic side; it reads STAQVS. A helical membrane pass occupies residues 257–277; the sequence is VMFPKFYINIMAALSWGTALF. The Lumenal segment spans residues 278 to 329; that stretch reads RFPIFSEPAEYQFADFADLSVASSSYADYLPKSYGMYSFLDSIGIGTACWLP. A helical transmembrane segment spans residues 330–350; sequence FLIVMVIYLFAALFVALLVIF. At 351–372 the chain is on the cytoplasmic side; it reads LKWLMSRIFNETIAETRWDTWS. The helical transmembrane segment at 373-393 threads the bilayer; the sequence is FIAGSLIRLYFLTYFPTVAYM. At 394–404 the chain is on the lumenal side; that stretch reads SFQFVAPPTGY. A helical membrane pass occupies residues 405–425; it reads EIIPVLWFIFFGIFIPVYLYM. Residues 426 to 457 lie on the Cytoplasmic side of the membrane; the sequence is NLAFVEPSSKLLEDQTYLHLFGSIYNSFREER. The chain crosses the membrane as a helical span at residues 458–480; that stretch reads VMFWIFPIAVQFMRGITVGVIGS. At 481–483 the chain is on the lumenal side; that stretch reads SGS. Residues 484–503 form a helical membrane-spanning segment; sequence AQLAIFFILEVANVVAYAYV. At 504 to 514 the chain is on the cytoplasmic side; it reads RPHFPQTSMNT. Residues 515–535 traverse the membrane as a helical segment; the sequence is LNTFISTMRLITVILMIPLDP. At 536–545 the chain is on the lumenal side; that stretch reads RLKVLGISRD. Residues 546–566 form a helical membrane-spanning segment; sequence LLAYAILFIHIMVCILFLLLS. Topologically, residues 567–862 are cytoplasmic; it reads TQRFMEVSAR…AESAWSIPHP (296 aa). Over residues 668–686 the composition is skewed to polar residues; sequence QASSLVPSKNNTASSSSLM. 2 disordered regions span residues 668–717 and 815–862; these read QASS…SVRK and VLRS…IPHP. The span at 689–700 shows a compositional bias: low complexity; sequence SPVTPSSPYSTS. Positions 834 to 850 are enriched in basic and acidic residues; that stretch reads EPSRDEQYSMERKKTDD.

It belongs to the transient receptor potential (TRP) ion channel family.

Its subcellular location is the cytoplasm. The protein localises to the golgi apparatus membrane. This is an uncharacterized protein from Schizosaccharomyces pombe (strain 972 / ATCC 24843) (Fission yeast).